Here is a 142-residue protein sequence, read N- to C-terminus: UPF0179 protein PYRAB06360 (142 aa).

This sequence belongs to the UPF0179 family.

The chain is UPF0179 protein PYRAB06360 from Pyrococcus abyssi (strain GE5 / Orsay).